We begin with the raw amino-acid sequence, 181 residues long: Malignant T-cell-amplified sequence 1-B (181 aa).

Positions 92–171 (LPHQQVDKGA…IGIENIHYLN (80 aa)) constitute a PUA domain.

Belongs to the MCTS1 family.

The protein localises to the cytoplasm. Functionally, plays a role as translation enhancer and involved in cell cycle regulation. This Xenopus laevis (African clawed frog) protein is Malignant T-cell-amplified sequence 1-B (mcts1-b).